Reading from the N-terminus, the 245-residue chain is tRNA pseudouridine synthase A (245 aa).

Catalysis depends on D52, which acts as the Nucleophile. Y111 serves as a coordination point for substrate.

It belongs to the tRNA pseudouridine synthase TruA family. Homodimer.

It catalyses the reaction uridine(38/39/40) in tRNA = pseudouridine(38/39/40) in tRNA. Its function is as follows. Formation of pseudouridine at positions 38, 39 and 40 in the anticodon stem and loop of transfer RNAs. This chain is tRNA pseudouridine synthase A, found in Wolbachia pipientis wMel.